A 72-amino-acid chain; its full sequence is uncharacterized protein (72 aa).

This is an uncharacterized protein from Acidianus hospitalis (AFV-1).